A 209-amino-acid chain; its full sequence is Rac-like GTP-binding protein ARAC7 (209 aa).

Position 13–20 (13–20 (GDGAVGKT)) interacts with GTP. Residues 35-43 (YIPTVFDNF) carry the Effector region motif. Residues 60 to 64 (DTAGQ) and 118 to 121 (TKLD) contribute to the GTP site. Residues cysteine 196, cysteine 203, and cysteine 206 are each lipidated (S-palmitoyl cysteine).

This sequence belongs to the small GTPase superfamily. Rho family. Although this sequence has a C-terminal -CXXX, it is palmitoylated at Cys-206, rather than prenylated.

The protein resides in the membrane. In terms of biological role, acts as a negative regulator of abscisic acid (ABA) responses. The sequence is that of Rac-like GTP-binding protein ARAC7 (ARAC7) from Arabidopsis thaliana (Mouse-ear cress).